Reading from the N-terminus, the 185-residue chain is Keratin-associated protein 4-8 (185 aa).

Repeat copies occupy residues Gly-14 to Asp-18, Leu-19 to Thr-23, Cys-24 to Ser-28, Cys-39 to Ser-43, Tyr-44 to Cys-48, Cys-49 to Gln-53, Cys-54 to Val-58, Cys-59 to Thr-63, Cys-64 to Ser-68, Cys-69 to Ser-73, Cys-74 to Gln-78, Cys-79 to Val-83, Cys-84 to Thr-88, Cys-89 to Ser-93, Cys-94 to Ser-98, Cys-99 to Ser-103, Cys-104 to Ser-108, Cys-109 to Gln-113, Cys-114 to Val-118, Cys-119 to Asn-123, Cys-124 to Ser-128, Cys-134 to Ser-138, Cys-139 to Ser-143, Cys-144 to Cys-148, and Cys-149 to Cys-164. A 25 X 5 AA repeats of C-C-[IKRQVHEC]-[SPRT]-[STCVQPR] region spans residues Gly-14–Cys-164.

Belongs to the KRTAP type 4 family. Interacts with hair keratins. As to expression, expressed in the hair follicles.

Functionally, in the hair cortex, hair keratin intermediate filaments are embedded in an interfilamentous matrix, consisting of hair keratin-associated proteins (KRTAP), which are essential for the formation of a rigid and resistant hair shaft through their extensive disulfide bond cross-linking with abundant cysteine residues of hair keratins. The matrix proteins include the high-sulfur and high-glycine-tyrosine keratins. The polypeptide is Keratin-associated protein 4-8 (KRTAP4-8) (Homo sapiens (Human)).